The chain runs to 823 residues: Apoptosis-resistant E3 ubiquitin protein ligase 1 (823 aa).

The stretch at 64–158 is one Filamin repeat; that stretch reads WDWKDPYEVG…VAYSPYYKIF (95 aa). Positions 315–345 are disordered; sequence PPMHMSSSQRRPSTAIEEDDEDSPSECHTPE. Residues 483–789 form an interaction with SOCS2 region; sequence SISDWSKNFE…THSTLPTAHT (307 aa). The HECT domain occupies 483–823; it reads SISDWSKNFE…SEGCEGFGML (341 aa). The active-site Glycyl thioester intermediate is C790.

As to quaternary structure, interacts with SOCS2. Interacts (via HECT domain) with HTRA2, DIABLO/SMAC and SEPTIN4; in the cytoplasm following induction of apoptosis. Post-translationally, autoubiquitinated in vitro in the presence of E2 enzyme UBE2D1/UBCH5A. Detected in brain, testis, heart, liver, lung and kidney with very low levels in skeletal muscle and spleen.

It carries out the reaction S-ubiquitinyl-[E2 ubiquitin-conjugating enzyme]-L-cysteine + [acceptor protein]-L-lysine = [E2 ubiquitin-conjugating enzyme]-L-cysteine + N(6)-ubiquitinyl-[acceptor protein]-L-lysine.. Its pathway is protein modification; protein ubiquitination. In terms of biological role, E3 ubiquitin-protein ligase that catalyzes 'Lys-11'- or 'Lys-33'-linked polyubiquitin chains, with some preference for 'Lys-33' linkages. E3 ubiquitin-protein ligases accept ubiquitin from an E2 ubiquitin-conjugating enzyme in the form of a thioester and then directly transfers the ubiquitin to targeted substrates. Ubiquitinates SEPTIN4, DIABLO/SMAC and HTRA2 in vitro. Modulates pulmonary inflammation by targeting SOCS2 for ubiquitination and subsequent degradation by the proteasome. The polypeptide is Apoptosis-resistant E3 ubiquitin protein ligase 1 (Arel1) (Mus musculus (Mouse)).